Reading from the N-terminus, the 543-residue chain is CTP synthase (543 aa).

Residues 1–270 form an amidoligase domain region; sequence MNNLTSTKFI…DTQILKHFNI (270 aa). Ser18 lines the CTP pocket. A UTP-binding site is contributed by Ser18. Residues 19-24 and Asp76 each bind ATP; that span reads SLGKGL. 2 residues coordinate Mg(2+): Asp76 and Glu144. Residues 151–153, 191–196, and Lys227 contribute to the CTP site; these read DIE and KTKPTQ. UTP-binding positions include 191–196 and Lys227; that span reads KTKPTQ. A Glutamine amidotransferase type-1 domain is found at 295-537; it reads TIAIIGKYIK…IQASLNYQET (243 aa). L-glutamine is bound at residue Gly356. Residue Cys383 is the Nucleophile; for glutamine hydrolysis of the active site. Residues 384-387, Glu407, and Arg462 contribute to the L-glutamine site; that span reads MGMQ. Residues His510 and Glu512 contribute to the active site.

It belongs to the CTP synthase family. In terms of assembly, homotetramer.

It carries out the reaction UTP + L-glutamine + ATP + H2O = CTP + L-glutamate + ADP + phosphate + 2 H(+). The enzyme catalyses L-glutamine + H2O = L-glutamate + NH4(+). It catalyses the reaction UTP + NH4(+) + ATP = CTP + ADP + phosphate + 2 H(+). Its pathway is pyrimidine metabolism; CTP biosynthesis via de novo pathway; CTP from UDP: step 2/2. Its activity is regulated as follows. Allosterically activated by GTP, when glutamine is the substrate; GTP has no effect on the reaction when ammonia is the substrate. The allosteric effector GTP functions by stabilizing the protein conformation that binds the tetrahedral intermediate(s) formed during glutamine hydrolysis. Inhibited by the product CTP, via allosteric rather than competitive inhibition. Catalyzes the ATP-dependent amination of UTP to CTP with either L-glutamine or ammonia as the source of nitrogen. Regulates intracellular CTP levels through interactions with the four ribonucleotide triphosphates. The protein is CTP synthase of Ehrlichia ruminantium (strain Gardel).